We begin with the raw amino-acid sequence, 144 residues long: Small ribosomal subunit protein eS19A (144 aa).

This sequence belongs to the eukaryotic ribosomal protein eS19 family. As to quaternary structure, component of the small ribosomal subunit (SSU). Mature yeast ribosomes consist of a small (40S) and a large (60S) subunit. The 40S small subunit contains 1 molecule of ribosomal RNA (18S rRNA) and 33 different proteins (encoded by 57 genes). The large 60S subunit contains 3 rRNA molecules (25S, 5.8S and 5S rRNA) and 46 different proteins (encoded by 81 genes).

It localises to the cytoplasm. Its function is as follows. Component of the ribosome, a large ribonucleoprotein complex responsible for the synthesis of proteins in the cell. The small ribosomal subunit (SSU) binds messenger RNAs (mRNAs) and translates the encoded message by selecting cognate aminoacyl-transfer RNA (tRNA) molecules. The large subunit (LSU) contains the ribosomal catalytic site termed the peptidyl transferase center (PTC), which catalyzes the formation of peptide bonds, thereby polymerizing the amino acids delivered by tRNAs into a polypeptide chain. The nascent polypeptides leave the ribosome through a tunnel in the LSU and interact with protein factors that function in enzymatic processing, targeting, and the membrane insertion of nascent chains at the exit of the ribosomal tunnel. eS19 is required for proper maturation of the small (40S) ribosomal subunit. Binds to 40S pre-ribosomal particles, probably required after association of NOC4 but before association of ENP1, TSR1 and RIO2 with 20/21S pre-rRNA. This Saccharomyces cerevisiae (strain ATCC 204508 / S288c) (Baker's yeast) protein is Small ribosomal subunit protein eS19A.